Here is a 487-residue protein sequence, read N- to C-terminus: UDP-N-acetylmuramate--L-alanine ligase (487 aa).

Position 126 to 132 (126 to 132) interacts with ATP; it reads GTHGKTT.

Belongs to the MurCDEF family.

It is found in the cytoplasm. The enzyme catalyses UDP-N-acetyl-alpha-D-muramate + L-alanine + ATP = UDP-N-acetyl-alpha-D-muramoyl-L-alanine + ADP + phosphate + H(+). It functions in the pathway cell wall biogenesis; peptidoglycan biosynthesis. Cell wall formation. The sequence is that of UDP-N-acetylmuramate--L-alanine ligase from Proteus mirabilis (strain HI4320).